Here is a 221-residue protein sequence, read N- to C-terminus: uncharacterized protein (221 aa).

The 189-residue stretch at 1 to 189 (MDSGKDTNGY…NVVYCSEKAV (189 aa)) folds into the Peptidase S8 domain.

The protein belongs to the peptidase S8 family.

This is an uncharacterized protein from Aquifex aeolicus (strain VF5).